The primary structure comprises 231 residues: Phosphatidylserine decarboxylase proenzyme (231 aa).

The active-site Schiff-base intermediate with substrate; via pyruvic acid is Ser188. The residue at position 188 (Ser188) is a Pyruvic acid (Ser); by autocatalysis.

It belongs to the phosphatidylserine decarboxylase family. PSD-A subfamily. Heterodimer of a large membrane-associated beta subunit and a small pyruvoyl-containing alpha subunit. It depends on pyruvate as a cofactor. Is synthesized initially as an inactive proenzyme. Formation of the active enzyme involves a self-maturation process in which the active site pyruvoyl group is generated from an internal serine residue via an autocatalytic post-translational modification. Two non-identical subunits are generated from the proenzyme in this reaction, and the pyruvate is formed at the N-terminus of the alpha chain, which is derived from the carboxyl end of the proenzyme. The post-translation cleavage follows an unusual pathway, termed non-hydrolytic serinolysis, in which the side chain hydroxyl group of the serine supplies its oxygen atom to form the C-terminus of the beta chain, while the remainder of the serine residue undergoes an oxidative deamination to produce ammonia and the pyruvoyl prosthetic group on the alpha chain.

Its subcellular location is the cell membrane. The enzyme catalyses a 1,2-diacyl-sn-glycero-3-phospho-L-serine + H(+) = a 1,2-diacyl-sn-glycero-3-phosphoethanolamine + CO2. It functions in the pathway phospholipid metabolism; phosphatidylethanolamine biosynthesis; phosphatidylethanolamine from CDP-diacylglycerol: step 2/2. Its function is as follows. Catalyzes the formation of phosphatidylethanolamine (PtdEtn) from phosphatidylserine (PtdSer). This chain is Phosphatidylserine decarboxylase proenzyme, found in Rickettsia africae (strain ESF-5).